A 297-amino-acid polypeptide reads, in one-letter code: Calponin-1 (297 aa).

The region spanning 28–131 is the Calponin-homology (CH) domain; the sequence is HQREQELREW…STLLALASMA (104 aa). Calponin-like repeat units lie at residues 164 to 189, 204 to 229, and 243 to 268; these read IGLQMGTNKFASQQGMTAYGTRRHLY, ISLQMGTNKGASQAGMTAPGTKRQIF, and VSLQMGSNKGASQRGMTVYGLPRQVY. A Phosphothreonine; by ROCK2 modification is found at Thr-170. Ser-175 carries the phosphoserine; by ROCK2 modification. Thr-180 and Thr-184 each carry phosphothreonine; by ROCK2. Thr-259 carries the phosphothreonine; by ROCK2 modification.

The protein belongs to the calponin family. Part of cGMP kinase signaling complex at least composed of ACTA2/alpha-actin, CNN1/calponin H1, PLN/phospholamban, PRKG1 and ITPR1.

Functionally, thin filament-associated protein that is implicated in the regulation and modulation of smooth muscle contraction. It is capable of binding to actin, calmodulin and tropomyosin. The interaction of calponin with actin inhibits the actomyosin Mg-ATPase activity. In Ovis aries (Sheep), this protein is Calponin-1 (CNN1).